The sequence spans 323 residues: tRNA dimethylallyltransferase (323 aa).

12–19 (GPTASGKT) is an ATP binding site. 14-19 (TASGKT) contributes to the substrate binding site. Interaction with substrate tRNA stretches follow at residues 37–40 (DSAL) and 161–165 (QRLVR).

It belongs to the IPP transferase family. In terms of assembly, monomer. It depends on Mg(2+) as a cofactor.

It carries out the reaction adenosine(37) in tRNA + dimethylallyl diphosphate = N(6)-dimethylallyladenosine(37) in tRNA + diphosphate. Catalyzes the transfer of a dimethylallyl group onto the adenine at position 37 in tRNAs that read codons beginning with uridine, leading to the formation of N6-(dimethylallyl)adenosine (i(6)A). The protein is tRNA dimethylallyltransferase of Stutzerimonas stutzeri (strain A1501) (Pseudomonas stutzeri).